A 407-amino-acid chain; its full sequence is Flagellar calcium-binding protein TB-44A (407 aa).

A disordered region spans residues 1-27 (MGCSASKDTTNSKDGAASKGGKDGKTT). Positions 25–399 (KTTADRKVAW…LQVCGDPDGE (375 aa)) are 2 X 186 AA almost perfect repeats. Positions 48–83 (ESKSRRIELFKRFDTNGTGKLSFREVLDGCYSILKL) constitute an EF-hand 1 domain. Asp-61, Asn-63, Thr-65, Lys-67, and Glu-72 together coordinate Ca(2+). An ancestral calcium site 2 region spans residues 110–121 (GVGEEDLVEFLE). 3 consecutive EF-hand domains span residues 130–165 (YDIFELTVMFDTMDKDGSLLLELQEFKEALPKWKEW), 167–202 (VDITDATTVFNEIDTNGSGVVTFDEFSCWAVTKKLQ), and 237–272 (ESKSRRIELFKQFDTNGTGKLGFREVLDGCYSILKL). The Ca(2+) site is built by Asp-143, Asp-145, Ser-147, Glu-154, Asp-180, Asn-182, Ser-184, Glu-191, Asp-250, Asn-252, Thr-254, Lys-256, and Glu-261. An ancestral calcium site 6 region spans residues 299-310 (GVGEEDLVEFLE). EF-hand domains follow at residues 319–354 (YDIFELTVMFDTMDKDGSLLLELQEFKEALKKWKEW) and 356–391 (VDITDATTVFNEIDTNGSGVVTFDEFSCWAVTKKLQ). Ca(2+) is bound by residues Asp-332, Asp-334, Ser-336, Glu-343, Asp-369, Asn-371, Ser-373, and Glu-380.

The protein belongs to the calflagin family.

It localises to the cell projection. The protein localises to the cilium. The protein resides in the flagellum. May contribute to the rapid motility of the trypanosomes, playing a role either in flagellar structure or in calcium metabolism. Could alternate between a GDP-bound inactive form to a calcium/GTP-bound active form. The sequence is that of Flagellar calcium-binding protein TB-44A from Trypanosoma brucei brucei.